The chain runs to 229 residues: Small ribosomal subunit protein uS5 (229 aa).

Residues L61–V124 form the S5 DRBM domain.

It belongs to the universal ribosomal protein uS5 family. As to quaternary structure, part of the 30S ribosomal subunit. Contacts protein S4.

Its function is as follows. With S4 and S12 plays an important role in translational accuracy. The chain is Small ribosomal subunit protein uS5 from Methanococcus maripaludis (strain C7 / ATCC BAA-1331).